The following is a 181-amino-acid chain: MSSLLQGVNLYLIGMMGAGKTTVGHLLAKELGYGFLDTDNVIAQATKKSINEIFAEAGEAGFRQIESDVLAQVCSYTKLTVATGGGIVLRRENWSYLHHGLILWLDVPVDILYARLAADTTRPLLQDDDPKGKLRSLLEQRTPLYSQADLRICVNAEETPEQIANKVMQAIPSVLKQTASN.

ATP is bound at residue 17 to 22; sequence GAGKTT. T21 is a Mg(2+) binding site. The substrate site is built by D39, R63, and G85. An ATP-binding site is contributed by R122. R141 provides a ligand contact to substrate.

This sequence belongs to the shikimate kinase family. In terms of assembly, monomer. The cofactor is Mg(2+).

The protein localises to the cytoplasm. The enzyme catalyses shikimate + ATP = 3-phosphoshikimate + ADP + H(+). It functions in the pathway metabolic intermediate biosynthesis; chorismate biosynthesis; chorismate from D-erythrose 4-phosphate and phosphoenolpyruvate: step 5/7. Its function is as follows. Catalyzes the specific phosphorylation of the 3-hydroxyl group of shikimic acid using ATP as a cosubstrate. In Nostoc sp. (strain PCC 7120 / SAG 25.82 / UTEX 2576), this protein is Shikimate kinase.